The primary structure comprises 576 residues: Carboxypeptidase S (576 aa).

The Cytoplasmic segment spans residues 1–19 (MIALPVEKAPRKSLWQRHR). Lysine 8 is covalently cross-linked (Glycyl lysine isopeptide (Lys-Gly) (interchain with G-Cter in ubiquitin)). A helical transmembrane segment spans residues 20–40 (AFISGIVALIIIGTFFLTSGL). The Lumenal portion of the chain corresponds to 41 to 576 (HPAPPHEAKR…EYIVNVNEYA (536 aa)). Residues 44 to 65 (PPHEAKRPHHGKGPMHSPKCEK) are disordered. N-linked (GlcNAc...) asparagine glycosylation is present at asparagine 88. A Zn(2+)-binding site is contributed by histidine 168. Aspartate 170 is a catalytic residue. Asparagine 176 carries an N-linked (GlcNAc...) asparagine glycan. Aspartate 205 contacts Zn(2+). Asparagine 228 carries an N-linked (GlcNAc...) asparagine glycan. The active-site Proton acceptor is glutamate 239. Zn(2+) is bound by residues glutamate 240 and aspartate 268. N-linked (GlcNAc...) asparagine glycans are attached at residues asparagine 381 and asparagine 525. Zn(2+) is bound at residue histidine 547.

Belongs to the peptidase M20A family. YscS is synthesized as one polypeptide chain precursor which after carbohydrate modification in the secretory pathway yields two active precursor molecules. The proteolytically unprocessed forms are associated with the membrane, whereas the mature forms of the enzyme are soluble. Zn(2+) is required as a cofactor. Post-translationally, glycosylated. Ubiquitinated. Ubiquitination mediates sorting into internal vesicles in late endosomes. TUL1 is required for ubiquitination.

The protein resides in the vacuole membrane. It catalyses the reaction Release of a C-terminal amino acid from a peptide in which glycine is the penultimate amino acid, e.g. Z-Gly-|-Leu.. Its function is as follows. Necessary for use of certain peptides as sole nitrogen source. May also cleave intracellularly generated peptides to recycle amino acids for protein synthesis. This chain is Carboxypeptidase S (CPS1), found in Saccharomyces cerevisiae (strain ATCC 204508 / S288c) (Baker's yeast).